The primary structure comprises 660 residues: DNA ligase (660 aa).

NAD(+)-binding positions include 33 to 37, 82 to 83, and Glu-110; these read DFVYD and SL. The active-site N6-AMP-lysine intermediate is Lys-112. Arg-133, Glu-167, Lys-281, and Lys-305 together coordinate NAD(+). The Zn(2+) site is built by Cys-396, Cys-399, Cys-412, and Cys-417. Residues 583–660 enclose the BRCT domain; sequence DENKLLVGKK…SFEDIKSYLD (78 aa).

The protein belongs to the NAD-dependent DNA ligase family. LigA subfamily. Requires Mg(2+) as cofactor. It depends on Mn(2+) as a cofactor.

It catalyses the reaction NAD(+) + (deoxyribonucleotide)n-3'-hydroxyl + 5'-phospho-(deoxyribonucleotide)m = (deoxyribonucleotide)n+m + AMP + beta-nicotinamide D-nucleotide.. In terms of biological role, DNA ligase that catalyzes the formation of phosphodiester linkages between 5'-phosphoryl and 3'-hydroxyl groups in double-stranded DNA using NAD as a coenzyme and as the energy source for the reaction. It is essential for DNA replication and repair of damaged DNA. This chain is DNA ligase, found in Borreliella afzelii (strain PKo) (Borrelia afzelii).